The primary structure comprises 279 residues: NADPH-dependent 7-cyano-7-deazaguanine reductase (279 aa).

Substrate is bound at residue 86-88 (IES). 88–89 (SK) is a binding site for NADPH. Cys187 serves as the catalytic Thioimide intermediate. Catalysis depends on Asp194, which acts as the Proton donor. 226 to 227 (HE) is a binding site for substrate. 255 to 256 (RG) serves as a coordination point for NADPH.

Belongs to the GTP cyclohydrolase I family. QueF type 2 subfamily. As to quaternary structure, homodimer.

The protein resides in the cytoplasm. It catalyses the reaction 7-aminomethyl-7-carbaguanine + 2 NADP(+) = 7-cyano-7-deazaguanine + 2 NADPH + 3 H(+). It functions in the pathway tRNA modification; tRNA-queuosine biosynthesis. Catalyzes the NADPH-dependent reduction of 7-cyano-7-deazaguanine (preQ0) to 7-aminomethyl-7-deazaguanine (preQ1). This is NADPH-dependent 7-cyano-7-deazaguanine reductase from Pasteurella multocida (strain Pm70).